Here is a 297-residue protein sequence, read N- to C-terminus: MNIAIRNPVPIRREEGSLQVGLDPNDRIETAKVFAVYGKGGIGKSTTSSNLSVAFSKLGKRVLQIGCDPKHDSTFTLTKRLAPTVIDALEAVNFHSEELRAEDFVVEGYNGVKCVEAGGPPAGTGCGGYVVGQTVKLLKEHHLLEDTDVVVFDVLGDVVCGGFASPLQHADRALIVTANDFDSIFAMNRIVAAIHTKSKNYGVRLGGVIANRSAGTDEIDRFNAAVGLRRLAHFPDLDVVRRSRLKKATLFEMEPTPELKAVTDEYMQLAETLWAGADPCEAVPMKDRDLFEFLGFD.

ATP contacts are provided by residues 41–46 (GIGKST) and lysine 70. Serine 45 lines the Mg(2+) pocket. Residues cysteine 126 and cysteine 160 each contribute to the [4Fe-4S] cluster site. Residues 211–212 (NR) and 235–237 (PDL) each bind ATP.

This sequence belongs to the NifH/BchL/ChlL family. In terms of assembly, homodimer. Protochlorophyllide reductase is composed of three subunits; BchL, BchN and BchB. It depends on [4Fe-4S] cluster as a cofactor.

The catalysed reaction is chlorophyllide a + oxidized 2[4Fe-4S]-[ferredoxin] + 2 ADP + 2 phosphate = protochlorophyllide a + reduced 2[4Fe-4S]-[ferredoxin] + 2 ATP + 2 H2O. Its pathway is porphyrin-containing compound metabolism; bacteriochlorophyll biosynthesis (light-independent). Its function is as follows. Component of the dark-operative protochlorophyllide reductase (DPOR) that uses Mg-ATP and reduced ferredoxin to reduce ring D of protochlorophyllide (Pchlide) to form chlorophyllide a (Chlide). This reaction is light-independent. The L component serves as a unique electron donor to the NB-component of the complex, and binds Mg-ATP. The protein is Light-independent protochlorophyllide reductase iron-sulfur ATP-binding protein of Methylorubrum extorquens (strain PA1) (Methylobacterium extorquens).